A 625-amino-acid polypeptide reads, in one-letter code: DNA polymerase DpoZ (625 aa).

The segment at 324-345 is disordered; it reads NQTKGETGGDDSGTEGTGTGRL.

Belongs to the DNA polymerase type-A family. DpoZ subfamily.

The catalysed reaction is DNA(n) + a 2'-deoxyribonucleoside 5'-triphosphate = DNA(n+1) + diphosphate. The enzyme catalyses dZTP + DNA(n) = DNA(n)-Z + diphosphate. Its function is as follows. DNA polymerase that preferentially incorporates the non-canonical base aminoadenine/dZTP instead of adenine into the synthesized DNA. More efficient in using dZTP instead of dATP as a substrate. In addition to this preference for dZTP, the phage also encodes a dATP triphosphohydrolase that removes dATP and its precursor dADP from the nucleotide pool of the host. The polypeptide is DNA polymerase DpoZ (dpoZ) (Salmonella enterica (Salmonella choleraesuis)).